The following is a 615-amino-acid chain: Dihydroxy-acid dehydratase (615 aa).

Position 81 (D81) interacts with Mg(2+). C122 is a [2Fe-2S] cluster binding site. Mg(2+) contacts are provided by D123 and K124. Residue K124 is modified to N6-carboxylysine. C193 is a binding site for [2Fe-2S] cluster. E489 lines the Mg(2+) pocket. S515 functions as the Proton acceptor in the catalytic mechanism.

This sequence belongs to the IlvD/Edd family. As to quaternary structure, homodimer. It depends on [2Fe-2S] cluster as a cofactor. The cofactor is Mg(2+).

It carries out the reaction (2R)-2,3-dihydroxy-3-methylbutanoate = 3-methyl-2-oxobutanoate + H2O. The enzyme catalyses (2R,3R)-2,3-dihydroxy-3-methylpentanoate = (S)-3-methyl-2-oxopentanoate + H2O. The protein operates within amino-acid biosynthesis; L-isoleucine biosynthesis; L-isoleucine from 2-oxobutanoate: step 3/4. It participates in amino-acid biosynthesis; L-valine biosynthesis; L-valine from pyruvate: step 3/4. In terms of biological role, functions in the biosynthesis of branched-chain amino acids. Catalyzes the dehydration of (2R,3R)-2,3-dihydroxy-3-methylpentanoate (2,3-dihydroxy-3-methylvalerate) into 2-oxo-3-methylpentanoate (2-oxo-3-methylvalerate) and of (2R)-2,3-dihydroxy-3-methylbutanoate (2,3-dihydroxyisovalerate) into 2-oxo-3-methylbutanoate (2-oxoisovalerate), the penultimate precursor to L-isoleucine and L-valine, respectively. This chain is Dihydroxy-acid dehydratase, found in Pseudomonas savastanoi pv. phaseolicola (strain 1448A / Race 6) (Pseudomonas syringae pv. phaseolicola (strain 1448A / Race 6)).